We begin with the raw amino-acid sequence, 315 residues long: Ribonuclease Z (315 aa).

Residues histidine 62, histidine 64, aspartate 66, histidine 67, histidine 144, aspartate 215, and histidine 273 each coordinate Zn(2+). Aspartate 66 acts as the Proton acceptor in catalysis.

This sequence belongs to the RNase Z family. Homodimer. Requires Zn(2+) as cofactor.

The catalysed reaction is Endonucleolytic cleavage of RNA, removing extra 3' nucleotides from tRNA precursor, generating 3' termini of tRNAs. A 3'-hydroxy group is left at the tRNA terminus and a 5'-phosphoryl group is left at the trailer molecule.. In terms of biological role, zinc phosphodiesterase, which displays some tRNA 3'-processing endonuclease activity. Probably involved in tRNA maturation, by removing a 3'-trailer from precursor tRNA. This is Ribonuclease Z from Synechococcus sp. (strain CC9311).